Reading from the N-terminus, the 560-residue chain is 2-succinylbenzoate--CoA ligase, chloroplastic/peroxisomal (560 aa).

A chloroplast-targeting transit peptide spans M1–R15. 3 helical membrane-spanning segments follow: residues L69–Y89, G189–G209, and I225–P245. The Microbody targeting signal motif lies at S558–L560.

This sequence belongs to the ATP-dependent AMP-binding enzyme family. MenE subfamily. As to expression, high expression in young leaves and flowers. Not expressed in roots.

The protein localises to the plastid. The protein resides in the chloroplast membrane. Its subcellular location is the peroxisome membrane. It catalyses the reaction 2-succinylbenzoate + ATP + CoA = 2-succinylbenzoyl-CoA + AMP + diphosphate. Its function is as follows. Involved in the biosynthesis of phylloquinone (vitamin K1). Converts 2-succinylbenzoate (OSB) to 2-succinylbenzoyl-CoA (OSB-CoA). This Arabidopsis thaliana (Mouse-ear cress) protein is 2-succinylbenzoate--CoA ligase, chloroplastic/peroxisomal (AAE14).